The primary structure comprises 111 residues: PCNA-associated factor (111 aa).

Serine 8 carries the phosphoserine modification. Lysine 15 participates in a covalent cross-link: Glycyl lysine isopeptide (Lys-Gly) (interchain with G-Cter in ubiquitin). A D-box motif is present at residues 23–34 (RKVLGSSTSATN). A disordered region spans residues 23–111 (RKVLGSSTSA…QPDHTNDEKE (89 aa)). Position 24 is an N6-acetyllysine; alternate (lysine 24). A Glycyl lysine isopeptide (Lys-Gly) (interchain with G-Cter in ubiquitin); alternate cross-link involves residue lysine 24. A phosphoserine mark is found at serine 28, serine 31, and serine 72. Residues 28–40 (SSTSATNSTSVSS) show a composition bias toward low complexity. The PIP-box signature appears at 62 to 72 (QKGIGEFFRLS). Over residues 72-81 (SPKDSEKENQ) the composition is skewed to basic and acidic residues. The short motif at 78-80 (KEN) is the KEN box element. Residues 85 to 97 (EAGSSGLGKAKRK) carry the Initiation motif motif.

In terms of assembly, interacts (when monoubiquitinated at Lys-15 and Lys-24) with PCNA. Interacts with isoform 2/p33ING1b of ING1. Interacts with BRCA1. Monoubiquitinated at Lys-15 and Lys-24 during normal S phase, promoting its association with PCNA. Also diubiquitinated at these 2 sites. Following DNA damage, monoubiquitin chains at Lys-15 and Lys-24 are probably extended, leading to disrupt the interaction with PCNA. Polyubiquitinated by the APC/C complex at the mitotic exit, leading to its degradation by the proteasome. In terms of tissue distribution, expressed predominantly in liver, pancreas and placenta. Not detected in heart or brain. Highly expressed in a number of tumors, especially esophageal tumors, in anaplastic thyroid carcinomas, adrenocortical carcinomas, and in non-small-cell lung cancer lines.

It is found in the nucleus. The protein resides in the cytoplasm. Its subcellular location is the perinuclear region. In terms of biological role, PCNA-binding protein that acts as a regulator of DNA repair during DNA replication. Following DNA damage, the interaction with PCNA is disrupted, facilitating the interaction between monoubiquitinated PCNA and the translesion DNA synthesis DNA polymerase eta (POLH) at stalled replisomes, facilitating the bypass of replication-fork-blocking lesions. Also acts as a regulator of centrosome number. This Homo sapiens (Human) protein is PCNA-associated factor.